We begin with the raw amino-acid sequence, 300 residues long: 4-hydroxybenzoate octaprenyltransferase (300 aa).

The next 8 membrane-spanning stretches (helical) occupy residues 32 to 52 (IGTY…SEGA), 55 to 75 (LKNL…GCVI), 108 to 128 (LFGI…ALTI), 149 to 169 (YLPQ…AFAA), 178 to 198 (AWLL…MYAM), 222 to 242 (AAVA…GAQH), 246 to 266 (VYYQ…QHLI), and 278 to 298 (FLNN…EFLF).

The protein belongs to the UbiA prenyltransferase family. The cofactor is Mg(2+).

It is found in the cell inner membrane. It carries out the reaction all-trans-octaprenyl diphosphate + 4-hydroxybenzoate = 4-hydroxy-3-(all-trans-octaprenyl)benzoate + diphosphate. Its pathway is cofactor biosynthesis; ubiquinone biosynthesis. Functionally, catalyzes the prenylation of para-hydroxybenzoate (PHB) with an all-trans polyprenyl group. Mediates the second step in the final reaction sequence of ubiquinone-8 (UQ-8) biosynthesis, which is the condensation of the polyisoprenoid side chain with PHB, generating the first membrane-bound Q intermediate 3-octaprenyl-4-hydroxybenzoate. In Hahella chejuensis (strain KCTC 2396), this protein is 4-hydroxybenzoate octaprenyltransferase.